The primary structure comprises 727 residues: 1,4-alpha-glucan branching enzyme GlgB (727 aa).

The active-site Nucleophile is the Asp405. Glu458 (proton donor) is an active-site residue.

The protein belongs to the glycosyl hydrolase 13 family. GlgB subfamily. Monomer.

It catalyses the reaction Transfers a segment of a (1-&gt;4)-alpha-D-glucan chain to a primary hydroxy group in a similar glucan chain.. Its pathway is glycan biosynthesis; glycogen biosynthesis. Its function is as follows. Catalyzes the formation of the alpha-1,6-glucosidic linkages in glycogen by scission of a 1,4-alpha-linked oligosaccharide from growing alpha-1,4-glucan chains and the subsequent attachment of the oligosaccharide to the alpha-1,6 position. In Yersinia pseudotuberculosis serotype I (strain IP32953), this protein is 1,4-alpha-glucan branching enzyme GlgB.